We begin with the raw amino-acid sequence, 1483 residues long: Chromosome partition protein MukB (1483 aa).

34-41 contributes to the ATP binding site; the sequence is GGNGAGKS. Coiled-coil stretches lie at residues 311–426 and 547–607; these read EMAR…LQRA and GQQV…WLAA. Residues 666-783 are flexible hinge; the sequence is PGGSEDARLN…KVPLFGRAAR (118 aa). 2 coiled-coil regions span residues 835–1115 and 1206–1266; these read EAAL…SAKA and DDPV…QAVS. The segment at 850–870 is disordered; the sequence is RELNNHESENQQQRQQYEQAK.

It belongs to the SMC family. MukB subfamily. As to quaternary structure, homodimerization via its hinge domain. Binds to DNA via its C-terminal region. Interacts, and probably forms a ternary complex, with MukE and MukF via its C-terminal region. The complex formation is stimulated by calcium or magnesium. Interacts with tubulin-related protein FtsZ.

Its subcellular location is the cytoplasm. The protein resides in the nucleoid. Its function is as follows. Plays a central role in chromosome condensation, segregation and cell cycle progression. Functions as a homodimer, which is essential for chromosome partition. Involved in negative DNA supercoiling in vivo, and by this means organize and compact chromosomes. May achieve or facilitate chromosome segregation by condensation DNA from both sides of a centrally located replisome during cell division. The protein is Chromosome partition protein MukB of Erwinia tasmaniensis (strain DSM 17950 / CFBP 7177 / CIP 109463 / NCPPB 4357 / Et1/99).